The primary structure comprises 279 residues: Vitamin B12-binding protein (279 aa).

The first 20 residues, 1–20 (MTFRFLCWLTGLLLCTAAYA), serve as a signal peptide directing secretion. Residues 24–276 (RVISLAPHAT…QLAELKLAPS (253 aa)) enclose the Fe/B12 periplasmic-binding domain. The cysteines at positions 189 and 265 are disulfide-linked.

The protein belongs to the BtuF family. As to quaternary structure, the complex is composed of two ATP-binding proteins (BtuD), two transmembrane proteins (BtuC) and a solute-binding protein (BtuF).

Its subcellular location is the periplasm. Functionally, part of the ABC transporter complex BtuCDF involved in vitamin B12 import. Binds vitamin B12 and delivers it to the periplasmic surface of BtuC. The chain is Vitamin B12-binding protein from Pectobacterium atrosepticum (strain SCRI 1043 / ATCC BAA-672) (Erwinia carotovora subsp. atroseptica).